Here is a 261-residue protein sequence, read N- to C-terminus: Indole-3-glycerol phosphate synthase (261 aa).

This sequence belongs to the TrpC family.

It carries out the reaction 1-(2-carboxyphenylamino)-1-deoxy-D-ribulose 5-phosphate + H(+) = (1S,2R)-1-C-(indol-3-yl)glycerol 3-phosphate + CO2 + H2O. It functions in the pathway amino-acid biosynthesis; L-tryptophan biosynthesis; L-tryptophan from chorismate: step 4/5. The chain is Indole-3-glycerol phosphate synthase from Campylobacter curvus (strain 525.92).